The sequence spans 115 residues: uncharacterized protein (115 aa).

This is an uncharacterized protein from Rickettsia prowazekii (strain Madrid E).